The sequence spans 501 residues: Type II secretion system protein E (501 aa).

Residue G262–S269 participates in ATP binding. Zn(2+) contacts are provided by C395, C398, C428, and C431.

The protein belongs to the GSP E family. In terms of assembly, forms homooligomers; most probably hexamers. Interacts with ExeL/GspL. Zn(2+) is required as a cofactor.

The protein resides in the cell inner membrane. The catalysed reaction is ATP + H2O + cellular proteinSide 1 = ADP + phosphate + cellular proteinSide 2.. ATPase component of the type II secretion system required for the energy-dependent secretion of extracellular factors such as proteases and toxins from the periplasm. Acts as a molecular motor to provide the energy that is required for assembly of the pseudopilus and the extrusion of substrates generated in the cytoplasm. This chain is Type II secretion system protein E (exeE), found in Aeromonas hydrophila.